The following is a 621-amino-acid chain: Chaperone protein HtpG (621 aa).

An a; substrate-binding region spans residues 1 to 341 (MSNQEYTFQT…SEDLPLNVSR (341 aa)). Residues 342 to 547 (EILQQNKILA…GDEQNAMMAN (206 aa)) form a b region. A c region spans residues 548 to 621 (LMRQMGQNMP…RLNSVLLKAL (74 aa)).

It belongs to the heat shock protein 90 family. Homodimer.

Its subcellular location is the cytoplasm. Its function is as follows. Molecular chaperone. Has ATPase activity. The chain is Chaperone protein HtpG from Helicobacter acinonychis (strain Sheeba).